Reading from the N-terminus, the 606-residue chain is Phosphoenolpyruvate carboxykinase [GTP] (606 aa).

Substrate-binding positions include Arg79 and 218-220 (YGG). Mn(2+) is bound by residues Lys227 and His247. Ser269 contributes to the substrate binding site. Residue 270 to 275 (ACGKTN) participates in GTP binding. Cys271 is an active-site residue. Residue Asp294 participates in Mn(2+) binding. 384–386 (NSR) lines the substrate pocket. GTP-binding positions include Arg386, Arg417, and 512-515 (FGEN).

It belongs to the phosphoenolpyruvate carboxykinase [GTP] family. In terms of assembly, monomer. Requires Mn(2+) as cofactor.

Its subcellular location is the cytoplasm. It carries out the reaction oxaloacetate + GTP = phosphoenolpyruvate + GDP + CO2. The protein operates within carbohydrate biosynthesis; gluconeogenesis. Its function is as follows. Catalyzes the conversion of oxaloacetate (OAA) to phosphoenolpyruvate (PEP), the rate-limiting step in the metabolic pathway that produces glucose from lactate and other precursors derived from the citric acid cycle. This chain is Phosphoenolpyruvate carboxykinase [GTP], found in Corynebacterium jeikeium (strain K411).